We begin with the raw amino-acid sequence, 220 residues long: MAKQEYKQLPKRSEVHSATEQFKDTIKTSLGLDLFKGLGLTIKEFFSPSVTIHYPMEQLPLSPRYRAVHHLQRLLDSGSERCIGCGLCEKICTSNCIRIITHKGEDNRKKIDSYTINLGRCIYCGLCAEVCPELAIVMGNRFENASTQRSQYGSKSEFLTNEQDAKNCSHAEFLGFGAVSPNYNERMQATPLDYVQEPSKEESKEETPTRSESHKGDENV.

4Fe-4S ferredoxin-type domains lie at 71 to 102 (LQRL…IITH) and 112 to 141 (DSYT…MGNR). The [4Fe-4S] cluster site is built by C82, C85, C88, C92, C121, C124, C127, and C131. The disordered stretch occupies residues 187 to 220 (MQATPLDYVQEPSKEESKEETPTRSESHKGDENV). Residues 198–220 (PSKEESKEETPTRSESHKGDENV) show a composition bias toward basic and acidic residues.

The protein belongs to the complex I 23 kDa subunit family. As to quaternary structure, NDH-1 is composed of 14 different subunits. Subunits NuoA, H, J, K, L, M, N constitute the membrane sector of the complex. The cofactor is [4Fe-4S] cluster.

Its subcellular location is the cell inner membrane. The catalysed reaction is a quinone + NADH + 5 H(+)(in) = a quinol + NAD(+) + 4 H(+)(out). In terms of biological role, NDH-1 shuttles electrons from NADH, via FMN and iron-sulfur (Fe-S) centers, to quinones in the respiratory chain. The immediate electron acceptor for the enzyme in this species is believed to be ubiquinone. Couples the redox reaction to proton translocation (for every two electrons transferred, four hydrogen ions are translocated across the cytoplasmic membrane), and thus conserves the redox energy in a proton gradient. In Helicobacter pylori (strain G27), this protein is NADH-quinone oxidoreductase subunit I.